Reading from the N-terminus, the 663-residue chain is Transketolase 2 (663 aa).

His-25 is a substrate binding site. Thiamine diphosphate-binding positions include His-65 and 113-115 (GPL). Asp-154 is a Mg(2+) binding site. Positions 155 and 184 each coordinate thiamine diphosphate. Residues Asn-184 and Ile-186 each contribute to the Mg(2+) site. Substrate is bound by residues His-259, Arg-356, and Ser-383. A thiamine diphosphate-binding site is contributed by His-259. Glu-410 acts as the Proton donor in catalysis. A thiamine diphosphate-binding site is contributed by Phe-436. Positions 460, 468, and 519 each coordinate substrate.

This sequence belongs to the transketolase family. In terms of assembly, homodimer. Mg(2+) is required as a cofactor. It depends on Ca(2+) as a cofactor. Mn(2+) serves as cofactor. The cofactor is Co(2+). Requires thiamine diphosphate as cofactor.

It carries out the reaction D-sedoheptulose 7-phosphate + D-glyceraldehyde 3-phosphate = aldehydo-D-ribose 5-phosphate + D-xylulose 5-phosphate. Its function is as follows. Catalyzes the transfer of a two-carbon ketol group from a ketose donor to an aldose acceptor, via a covalent intermediate with the cofactor thiamine pyrophosphate. The sequence is that of Transketolase 2 (tkt2) from Aliivibrio fischeri (strain ATCC 700601 / ES114) (Vibrio fischeri).